Reading from the N-terminus, the 332-residue chain is DNA-directed RNA polymerase subunit alpha (332 aa).

The interval 1-232 is alpha N-terminal domain (alpha-NTD); sequence MQVSNFLKPR…DQLTAFVELE (232 aa). Residues 246 to 332 form an alpha C-terminal domain (alpha-CTD) region; the sequence is IDPVLLQPID…LREEETKVTA (87 aa).

Belongs to the RNA polymerase alpha chain family. In terms of assembly, homodimer. The RNAP catalytic core consists of 2 alpha, 1 beta, 1 beta' and 1 omega subunit. When a sigma factor is associated with the core the holoenzyme is formed, which can initiate transcription.

The enzyme catalyses RNA(n) + a ribonucleoside 5'-triphosphate = RNA(n+1) + diphosphate. DNA-dependent RNA polymerase catalyzes the transcription of DNA into RNA using the four ribonucleoside triphosphates as substrates. This Nitrosococcus oceani (strain ATCC 19707 / BCRC 17464 / JCM 30415 / NCIMB 11848 / C-107) protein is DNA-directed RNA polymerase subunit alpha.